We begin with the raw amino-acid sequence, 81 residues long: Cytochrome c oxidase subunit 7A1, mitochondrial (81 aa).

The N-terminal 21 residues, 1–21 (MRHLLGLPQLASRAFSTTVRQ), are a transit peptide targeting the mitochondrion. Residues 51 to 72 (ILYRLTMTLTVVGTGYSLYWLL) traverse the membrane as a helical segment.

Belongs to the cytochrome c oxidase VIIa family. In terms of assembly, component of the complex IV (CIV, cytochrome c oxidase). The complex exists as a monomer or a dimer and forms supercomplexes (SCs) in the inner mitochondrial membrane with NADH-ubiquinone oxidoreductase (complex I, CI) and ubiquinol-cytochrome c oxidoreductase (cytochrome b-c1 complex, complex III, CIII), resulting in different assemblies (supercomplex SCI(1)III(2)IV(1) and megacomplex MCI(2)III(2)IV(2)).

The protein localises to the mitochondrion inner membrane. The protein operates within energy metabolism; oxidative phosphorylation. Functionally, component of the mitochondrial respiratory complex IV (CIV, also named cytochrome c oxidase complex), the last enzyme in the mitochondrial electron transport chain which drives oxidative phosphorylation. The CIV complex is the component of the respiratory chain that catalyzes the reduction of oxygen to water. Acts as an assembly factor that specifically drives the homodimerization of CIV complexes, mediating the formation of mitochondrial respiratory supercomplexes (respirasomes) containing two CIV: supercomplxes with two molecules of CIV show improved activity. The protein is Cytochrome c oxidase subunit 7A1, mitochondrial of Danio rerio (Zebrafish).